Here is a 480-residue protein sequence, read N- to C-terminus: Beta-amyrin 28-monooxygenase (480 aa).

Residues Val-3–Leu-23 traverse the membrane as a helical segment. Cys-427 lines the heme pocket.

The protein belongs to the cytochrome P450 family. The cofactor is heme. Expressed in leaves, stems and fruit skin.

Its subcellular location is the membrane. The catalysed reaction is beta-amyrin + 3 reduced [NADPH--hemoprotein reductase] + 3 O2 = oleanolate + 3 oxidized [NADPH--hemoprotein reductase] + 4 H2O + 4 H(+). Catalyzes the carboxylation of beta-amyrin at the C-28 position to form oleanolic acid. May be involved in saponin biosynthesis in fruit skin. The sequence is that of Beta-amyrin 28-monooxygenase from Vitis vinifera (Grape).